Here is a 518-residue protein sequence, read N- to C-terminus: Probable high-affinity hexose transporter ght7 (518 aa).

The Cytoplasmic portion of the chain corresponds to 1 to 27 (MRDFQSRFADRYNQITNSYSYSSSRQG). The helical transmembrane segment at 28-48 (LITGMVNVGSFFGCLLSSPVA) threads the bilayer. The Extracellular portion of the chain corresponds to 49–54 (DKIGKR). The helical transmembrane segment at 55–75 (LSIIVWTTVYLIGIIIQVTTV) threads the bilayer. The Cytoplasmic segment spans residues 76-77 (PS). The helical transmembrane segment at 78–98 (WVQILVAKIWTGLSIGALSVI) threads the bilayer. Topologically, residues 99 to 112 (TPGYQSEVAPAIMR) are extracellular. Residues 113-133 (GAIVTTYQLFITLGIFIAACI) form a helical membrane-spanning segment. At 134-149 (NMGTHKYSHGTTAQWR) the chain is on the cytoplasmic side. The helical transmembrane segment at 150 to 170 (ISIGINLLWGIITLVGIIFLP) threads the bilayer. The Extracellular portion of the chain corresponds to 171-236 (ESPRYLIAIG…IFNANIRYRT (66 aa)). A helical membrane pass occupies residues 237–257 (FLGMAVMMFQQLTGANYYFYY). Residues 258–271 (GTQVFRGTGMDSPY) lie on the Cytoplasmic side of the membrane. Residues 272–292 (LAALIPDAVNCGCTFGAIFVL) traverse the membrane as a helical segment. Topologically, residues 293–298 (EFFGRR) are extracellular. Residues 299 to 319 (SPLIVGGIWQYICFFIYAAVG) traverse the membrane as a helical segment. Over 320–333 (DRALYHKNGTSNHR) the chain is Cytoplasmic. The chain crosses the membrane as a helical span at residues 334–354 (AGAVMIVFSCLFIFSFSQTWA). At 355–374 (PAAYVIVGESYPVRYRSKCA) the chain is on the extracellular side. The helical transmembrane segment at 375–395 (AVATSANWFWNFLISFFTPFI) threads the bilayer. Topologically, residues 396–402 (TNSIGFK) are cytoplasmic. Residues 403 to 423 (YGYIFASCNLTGAAIIFLFVH) form a helical membrane-spanning segment. Residues 424-518 (ETKGRTLEEI…IRPDKREPRL (95 aa)) lie on the Extracellular side of the membrane. A compositionally biased stretch (polar residues) spans 477-506 (IENTDNQGDSGSFQTSTPDDSRPEQNQASA). Positions 477–518 (IENTDNQGDSGSFQTSTPDDSRPEQNQASATYIRPDKREPRL) are disordered.

The protein belongs to the major facilitator superfamily. Sugar transporter (TC 2.A.1.1) family.

The protein resides in the membrane. This chain is Probable high-affinity hexose transporter ght7 (ght7), found in Schizosaccharomyces pombe (strain 972 / ATCC 24843) (Fission yeast).